Reading from the N-terminus, the 79-residue chain is Small ribosomal subunit protein bS18 (79 aa).

This sequence belongs to the bacterial ribosomal protein bS18 family. As to quaternary structure, part of the 30S ribosomal subunit. Forms a tight heterodimer with protein bS6.

Functionally, binds as a heterodimer with protein bS6 to the central domain of the 16S rRNA, where it helps stabilize the platform of the 30S subunit. This Nitrobacter winogradskyi (strain ATCC 25391 / DSM 10237 / CIP 104748 / NCIMB 11846 / Nb-255) protein is Small ribosomal subunit protein bS18.